Reading from the N-terminus, the 103-residue chain is Putative membrane protein insertion efficiency factor (103 aa).

Belongs to the UPF0161 family.

It is found in the cell inner membrane. Functionally, could be involved in insertion of integral membrane proteins into the membrane. In Chlamydia felis (strain Fe/C-56) (Chlamydophila felis), this protein is Putative membrane protein insertion efficiency factor.